The primary structure comprises 237 residues: Bax inhibitor 1 (237 aa).

Residues 1–29 (MNIFDRKINFDALLKFSHITPSTQQHLKK) are Cytoplasmic-facing. K7 participates in a covalent cross-link: Glycyl lysine isopeptide (Lys-Gly) (interchain with G-Cter in ubiquitin). Residues 30-50 (VYASFALCMFVAAAGAYVHVV) form a helical membrane-spanning segment. The Lumenal segment spans residues 51 to 52 (TH). Residues 53 to 73 (FIQAGLLSALGSLALMIWLMA) form a helical membrane-spanning segment. At 74-86 (TPHSHETEQKRLG) the chain is on the cytoplasmic side. Residues 87-107 (LLAGFAFLTGVGLGPALELCI) form a helical membrane-spanning segment. Over 108 to 112 (AVNPS) the chain is Lumenal. A helical membrane pass occupies residues 113–133 (ILPTAFMGTAMIFTCFSLSAL). Residues 134-139 (YARRRS) lie on the Cytoplasmic side of the membrane. The chain crosses the membrane as a helical span at residues 140 to 160 (YLFLGGILMSAMSLMLLSSLG). Residues 161 to 166 (NLFFGS) are Lumenal-facing. A helical transmembrane segment spans residues 167–187 (IWLFQANLYLGLLVMCGFVLF). Topologically, residues 188-206 (DTQLIIEKAEHGDKDYIWH) are cytoplasmic. Residues 207-227 (CVDLFLDFVTLFRKLMLILAF) constitute an intramembrane region (helical). Over 228 to 237 (NEKDKKKEKK) the chain is Cytoplasmic.

Belongs to the BI1 family. In terms of assembly, interacts with BCL2. Interacts with BCL2L1. Interacts with ERN1. Post-translationally, ubiquitinated by BFAR, leading to proteasomal degradation. As to expression, highly abundant in adult testis.

Its subcellular location is the endoplasmic reticulum membrane. Endoplasmic reticulum (ER)-resident protein that confers cellular protection as an anti-apoptotic protein by limiting multiple stress-inducing pathways surrounding the endoplasmic reticulum and mitochondria. Inhibits the activities of the key sensor for the endoplasmic reticulum unfolded protein response IRE1alpha/ERN1 both directly and by blocking BAX/BAK binding. Modulates ER calcium homeostasis by acting as a calcium-leak channel. Negatively regulates autophagy and autophagosome formation, especially during periods of nutrient deprivation, and reduces cell survival during starvation. The polypeptide is Bax inhibitor 1 (Tmbim6) (Mus musculus (Mouse)).